The following is a 964-amino-acid chain: Myocardin-related transcription factor A (964 aa).

The interval 1 to 291 (MTLLEPEMLM…KQDKGAPAMD (291 aa)) is mediates interaction with SCAI and ACTB. Residues 15–40 (SVLQLKLQQRRTREELVSQGIMPPLK) form an RPEL 1 repeat. The residue at position 41 (serine 41) is a Phosphoserine. The tract at residues 41 to 58 (SPAAFHEQRRSLERARTE) is intervening spacer sequence 1. The RPEL 2 repeat unit spans residues 59–84 (DYLKRKIRSRPERAELVRMHILEETS). Positions 62–100 (KRKIRSRPERAELVRMHILEETSAEPSLQAKQLKLKRAR) match the Bipartite Nuclear localization signal motif. The tract at residues 85–102 (AEPSLQAKQLKLKRARLA) is intervening spacer sequence 2. An RPEL 3 repeat occupies 103–128 (DDLNEKIAQRPGPMELVEKNILPVES). Disordered regions lie at residues 145 to 292 (ADSS…AMDS) and 328 to 371 (LPAP…RQSS). Serine 159, serine 174, and serine 191 each carry phosphoserine. The segment covering 186 to 197 (SATSISPTQVLS) has biased composition (polar residues). A compositionally biased stretch (pro residues) spans 215–224 (PPLPPAPLLP). The span at 251 to 266 (ASEKSQRSKKAKELKP) shows a compositional bias: basic and acidic residues. Low complexity predominate over residues 340–365 (GSSAPTPSRSLSTSSSPSSGTPGPSG). Residues serine 349 and serine 351 each carry the phosphoserine modification. Phosphothreonine is present on threonine 352. Residues serine 355 and serine 358 each carry the phosphoserine modification. Position 360 is a phosphothreonine (threonine 360). Serine 371 carries the phosphoserine modification. The SAP domain maps to 385-419 (LDDMKVAELKQELKLRSLPVSGTKTELIERLRAYQ). A phosphoserine mark is found at serine 423 and serine 484. A disordered region spans residues 484-508 (STGSTPPVSPTPSERSLLSTGDENS). Threonine 485 carries the phosphothreonine modification. Serine 487 bears the Phosphoserine mark. Residue threonine 488 is modified to Phosphothreonine. Phosphoserine is present on serine 492. Residue threonine 494 is modified to Phosphothreonine. Serine 496 bears the Phosphoserine mark. Over residues 497-508 (ERSLLSTGDENS) the composition is skewed to polar residues. Phosphoserine is present on residues serine 520, serine 530, serine 544, and serine 548. A coiled-coil region spans residues 552–600 (RAELEGLDKDQMLQEKDKQIEELTRMLQQKQQLVELLRLQLEQQKRAQQ). A phosphoserine mark is found at serine 605, serine 606, serine 651, serine 687, serine 718, serine 724, and serine 728. The tract at residues 638 to 673 (TTNHGDTQAPAPESPPVVVKQEAGPPEPDLAPSSQL) is disordered. Disordered stretches follow at residues 706 to 779 (NKSA…SSSQ) and 796 to 849 (ADFK…RLED). Low complexity predominate over residues 715–727 (PAGSPQQPLSQPG). Polar residues predominate over residues 764 to 779 (TVTQQPKQQENGSSSQ). Residues 796–810 (ADFKEPPSLPGKEKS) show a composition bias toward basic and acidic residues. Residue serine 810 is modified to Phosphoserine. A Phosphothreonine modification is found at threonine 822. Phosphoserine is present on residues serine 826 and serine 840. Position 842 is a phosphothreonine (threonine 842). The residue at position 892 (serine 892) is a Phosphoserine.

In terms of assembly, interacts with SRF, forming the SRF-MRTFA nuclear complex which binds the 5'-CArG-3' consensus motif (CArG box) on DNA via SRF. Interacts (via RPEL repeats) with globular actin (G-actin), thereby regulating its subcellular location and activity of the complex formed with SRF. Either forms a trivalent (by binding three G-actin monomers) or pentavalent (by binding five G-actin monomers) complex with G-actin. Forms a nuclear ternary complex with SCAI and SRF, leading to suppress MRTFA-induced SRF transcriptional activity. Interacts with beta-actin (ACTB); interaction with ACTB prevents interaction with SCAI. Interacts with MRTFB. Post-translationally, phosphorylation at Ser-41 by Erk inhibits binding of globular actin (G-actin), unmasking the nuclear localization signal (NLS) and promoting nuclear import. As to expression, expressed in heart, brain, spleen, lung, liver, muscle, kidney and testis.

Its subcellular location is the cytoplasm. The protein resides in the nucleus. Its function is as follows. Transcription coactivator that associates with the serum response factor (SRF) transcription factor to control expression of genes regulating the cytoskeleton during development, morphogenesis and cell migration. The SRF-MRTFA complex activity responds to Rho GTPase-induced changes in cellular globular actin (G-actin) concentration, thereby coupling cytoskeletal gene expression to cytoskeletal dynamics. MRTFA binds G-actin via its RPEL repeats, regulating activity of the MRTFA-SRF complex. Activity is also regulated by filamentous actin (F-actin) in the nucleus. The protein is Myocardin-related transcription factor A (Mrtfa) of Mus musculus (Mouse).